Reading from the N-terminus, the 92-residue chain is Small ribosomal subunit protein bS20 (92 aa).

It belongs to the bacterial ribosomal protein bS20 family.

Binds directly to 16S ribosomal RNA. The chain is Small ribosomal subunit protein bS20 from Magnetococcus marinus (strain ATCC BAA-1437 / JCM 17883 / MC-1).